The sequence spans 1342 residues: MVYSYTEKKRIRKDFGKRPQVLDVPYLLSIQLDSFQKFIEQDPEGQYGLEAAFRSVFPIQSYSGNSELQYVSYRLGEPVFDVQECQIRGVTYSAPLRVKLRLVIYEREAPEGTVKDIKEQEVYMGEIPLMTDNGTFVINGTERVIVSQLHRSPGVFFDSDKGKTHSSGKVLYNARIIPYRGSWLDFEFDPKDNLFVRIDRRRKLPATIILRALQYTTEQILDLFFEKVIFEIRDNKLQMELVPERLRGETASFDIEANGKVYVEKGRRITARHIRQLEKDDIKHIEVPVEYIAGKVASKDYVDESTGELICAANMELSLDLLAKLSQSGHKRIETLFTNDLDHGPYISETVRIDPTNDRLSALVEIYRMMRPGEPPTREAAESLFENLFFSEDRYDLSAVGRMKFNRSLLRDEIEGSGILSKDDIIDVMKKLIDIRNGKGEVDDIDHLGNRRIRSVGEMAENQFRVGLVRVERAVKERLSLGDLDTLMPQDMINAKPISAAVKEFFGSSQLSQFMDQNNPLSEITHKRRISALGPGGLTRERAGFEVRDVHPTHYGRVCPIETPEGPNIGLINSLSVYAQTNEYGFLETPYRKVTDGVVTDEIHYLSAIEEGNYVIAQANSNLDDEGHFVEDLVTCRSKGESSLFSRDQVDYMDVSTQQVVSVGASLIPFLEHDDANRALMGANMQRQAVPTLRADKPLVGTGMERAVAVDSGVTAVAKRGGTVQYVDASRIVIKVNEDEMYPGEAGIDIYNLTKYTRSNQNTCINQMPCVSLGEPVERGDVLADGPSTDLGELALGQNMRVAFMPWNGYNFEDSILVSERVVQEDRFTTIHIQELACVSRDTKLGPEEITADIPNVGEAALSKLDESGIVYIGAEVTGGDILVGKVTPKGETQLTPEEKLLRAIFGEKASDVKDSSLRVPNGVSGTVIDVQVFTRDGVEKDKRALEIEEMQLKQAKKDLSEELQILEAGLFSRIHAVLVSGGVEAEKLDKLPRDRWLELGLTDEEKQNQLEQLAEQYDELKHEFEKKLEAKRRKITQGDDLAPGVLKIVKVYLAVKRRIQPGDKMAGRHGNKGVISKINPIEDMPYDENGTPVDIVLNPLGVPSRMNIGQILETHLGMAAKGIGDKINAMLKQQQEVAKLREFIQRAYDLGADVRQKVDLNTFSDEEVLRLAENLRKGMPIATPVFDGAKEAEIKELLKLGDLPTSGQITLFDGRTGEQFERSVTVGYMYMLKLNHLVDDKMHARSTGSYSLVTQQPLGGKAQFGGQRFGEMEVWALEAYGAAYTLQEMLTVKSDDVNGRTKMYKNIVDGNHQMEPGMPESFNVLLKEIRSLGINIELEDE.

This sequence belongs to the RNA polymerase beta chain family. The RNAP catalytic core consists of 2 alpha, 1 beta, 1 beta' and 1 omega subunit. When a sigma factor is associated with the core the holoenzyme is formed, which can initiate transcription.

It catalyses the reaction RNA(n) + a ribonucleoside 5'-triphosphate = RNA(n+1) + diphosphate. In terms of biological role, DNA-dependent RNA polymerase catalyzes the transcription of DNA into RNA using the four ribonucleoside triphosphates as substrates. The chain is DNA-directed RNA polymerase subunit beta from Citrobacter koseri (strain ATCC BAA-895 / CDC 4225-83 / SGSC4696).